Reading from the N-terminus, the 70-residue chain is Conotoxin ArMKLT2-0111 (70 aa).

Positions 1 to 22 (MKLTCVLIIAVLFLTACQLTTG) are cleaved as a signal peptide. The propeptide occupies 23 to 40 (EQKDHALRSTDKNSKLTR). At Gln-41 the chain carries Pyrrolidone carboxylic acid. Intrachain disulfides connect Cys-42-Cys-56, Cys-49-Cys-60, and Cys-55-Cys-67.

This sequence belongs to the conotoxin O1 superfamily. In terms of tissue distribution, expressed by the venom duct.

Its subcellular location is the secreted. The chain is Conotoxin ArMKLT2-0111 from Conus arenatus (Sand-dusted cone).